The chain runs to 489 residues: Diaminopimelate decarboxylase 2, chloroplastic (489 aa).

Residues 1–50 constitute a chloroplast transit peptide; that stretch reads MAAVTQFLSQPSSIRGTLNQYQLNQTSLSRIPFLSLKSTLKPLKRLSVKA. Ala-51 is modified (N-acetylalanine). Lys-130 is subject to N6-(pyridoxal phosphate)lysine. Pyridoxal 5'-phosphate is bound by residues Gly-309 and 345–348; that span reads EPGR. Substrate is bound by residues Arg-348, Arg-384, and Tyr-388. Cys-416 acts as the Proton donor in catalysis. Positions 417 and 445 each coordinate substrate. Pyridoxal 5'-phosphate is bound at residue Tyr-445.

This sequence belongs to the Orn/Lys/Arg decarboxylase class-II family. LysA subfamily. As to quaternary structure, homodimer. Pyridoxal 5'-phosphate is required as a cofactor.

The protein localises to the plastid. The protein resides in the chloroplast. It catalyses the reaction meso-2,6-diaminopimelate + H(+) = L-lysine + CO2. The protein operates within amino-acid biosynthesis; L-lysine biosynthesis via DAP pathway; L-lysine from DL-2,6-diaminopimelate: step 1/1. Its function is as follows. Specifically catalyzes the decarboxylation of meso-diaminopimelate (meso-DAP) to L-lysine. In Arabidopsis thaliana (Mouse-ear cress), this protein is Diaminopimelate decarboxylase 2, chloroplastic (LYSA2).